Consider the following 283-residue polypeptide: Bifunctional protein FolD (283 aa).

Residues 165–167 (GAS) and S190 contribute to the NADP(+) site.

This sequence belongs to the tetrahydrofolate dehydrogenase/cyclohydrolase family. In terms of assembly, homodimer.

The catalysed reaction is (6R)-5,10-methylene-5,6,7,8-tetrahydrofolate + NADP(+) = (6R)-5,10-methenyltetrahydrofolate + NADPH. It catalyses the reaction (6R)-5,10-methenyltetrahydrofolate + H2O = (6R)-10-formyltetrahydrofolate + H(+). It functions in the pathway one-carbon metabolism; tetrahydrofolate interconversion. Catalyzes the oxidation of 5,10-methylenetetrahydrofolate to 5,10-methenyltetrahydrofolate and then the hydrolysis of 5,10-methenyltetrahydrofolate to 10-formyltetrahydrofolate. This is Bifunctional protein FolD from Cupriavidus taiwanensis (strain DSM 17343 / BCRC 17206 / CCUG 44338 / CIP 107171 / LMG 19424 / R1) (Ralstonia taiwanensis (strain LMG 19424)).